The primary structure comprises 629 residues: tRNA uridine 5-carboxymethylaminomethyl modification enzyme MnmG (629 aa).

FAD is bound at residue 13 to 18 (GGGHAG). 273-287 (GPRYCPSIEDKVVRF) contributes to the NAD(+) binding site.

The protein belongs to the MnmG family. Homodimer. Heterotetramer of two MnmE and two MnmG subunits. FAD serves as cofactor.

The protein localises to the cytoplasm. Functionally, NAD-binding protein involved in the addition of a carboxymethylaminomethyl (cmnm) group at the wobble position (U34) of certain tRNAs, forming tRNA-cmnm(5)s(2)U34. The chain is tRNA uridine 5-carboxymethylaminomethyl modification enzyme MnmG from Nitrosococcus oceani (strain ATCC 19707 / BCRC 17464 / JCM 30415 / NCIMB 11848 / C-107).